Reading from the N-terminus, the 96-residue chain is (4S)-4-hydroxy-5-phosphonooxypentane-2,3-dione isomerase (96 aa).

The ABM domain maps to 2 to 91 (HVTLVEINVK…MTGPRKKTVF (90 aa)).

It belongs to the LsrG family. As to quaternary structure, homodimer.

Its subcellular location is the cytoplasm. It catalyses the reaction (2S)-2-hydroxy-3,4-dioxopentyl phosphate = 3-hydroxy-2,4-dioxopentyl phosphate. In terms of biological role, involved in the degradation of phospho-AI-2, thereby terminating induction of the lsr operon and closing the AI-2 signaling cycle. Catalyzes the conversion of (4S)-4-hydroxy-5-phosphonooxypentane-2,3-dione (P-DPD) to 3-hydroxy-5-phosphonooxypentane-2,4-dione (P-HPD). This chain is (4S)-4-hydroxy-5-phosphonooxypentane-2,3-dione isomerase, found in Yersinia pseudotuberculosis serotype O:1b (strain IP 31758).